The following is a 336-amino-acid chain: UDP-N-acetylglucosamine--N-acetylmuramyl-(pentapeptide) pyrophosphoryl-undecaprenol N-acetylglucosamine transferase (336 aa).

UDP-N-acetyl-alpha-D-glucosamine-binding positions include 10 to 12 (TGG), Asn-124, Arg-157, Ser-179, and Gln-277.

Belongs to the glycosyltransferase 28 family. MurG subfamily.

It localises to the cell inner membrane. The enzyme catalyses di-trans,octa-cis-undecaprenyl diphospho-N-acetyl-alpha-D-muramoyl-L-alanyl-D-glutamyl-meso-2,6-diaminopimeloyl-D-alanyl-D-alanine + UDP-N-acetyl-alpha-D-glucosamine = di-trans,octa-cis-undecaprenyl diphospho-[N-acetyl-alpha-D-glucosaminyl-(1-&gt;4)]-N-acetyl-alpha-D-muramoyl-L-alanyl-D-glutamyl-meso-2,6-diaminopimeloyl-D-alanyl-D-alanine + UDP + H(+). It functions in the pathway cell wall biogenesis; peptidoglycan biosynthesis. In terms of biological role, cell wall formation. Catalyzes the transfer of a GlcNAc subunit on undecaprenyl-pyrophosphoryl-MurNAc-pentapeptide (lipid intermediate I) to form undecaprenyl-pyrophosphoryl-MurNAc-(pentapeptide)GlcNAc (lipid intermediate II). This is UDP-N-acetylglucosamine--N-acetylmuramyl-(pentapeptide) pyrophosphoryl-undecaprenol N-acetylglucosamine transferase from Wolinella succinogenes (strain ATCC 29543 / DSM 1740 / CCUG 13145 / JCM 31913 / LMG 7466 / NCTC 11488 / FDC 602W) (Vibrio succinogenes).